The primary structure comprises 218 residues: Cytidylate kinase (218 aa).

Residue 21–29 participates in ATP binding; the sequence is GPAASGKGT.

Belongs to the cytidylate kinase family. Type 1 subfamily.

It is found in the cytoplasm. It carries out the reaction CMP + ATP = CDP + ADP. The catalysed reaction is dCMP + ATP = dCDP + ADP. The sequence is that of Cytidylate kinase from Rickettsia canadensis (strain McKiel).